The primary structure comprises 566 residues: Liver carboxylesterase (566 aa).

Residues 1–18 (MWLLPLVLTSLASSATWA) form the signal peptide. Asparagine 80 is a glycosylation site (N-linked (GlcNAc...) asparagine). A disulfide bond links cysteine 88 and cysteine 117. Serine 222 serves as the catalytic Acyl-ester intermediate. Cysteine 274 and cysteine 285 are disulfide-bonded. The active-site Charge relay system is the glutamate 354. Position 379 is a phosphoserine (serine 379). The active-site Charge relay system is histidine 467. Residues 563–566 (HAEL) carry the Prevents secretion from ER motif.

The protein belongs to the type-B carboxylesterase/lipase family.

Its subcellular location is the endoplasmic reticulum lumen. It carries out the reaction a carboxylic ester + H2O = an alcohol + a carboxylate + H(+). Activated by CHAPS at concentrations of up to 130 mM, higher concentrations reduce activity. In the presence of CHAPS, activity is stimulated by non-ionic detergents. Inhibited by the esterase inhibitors diisopropylfluorophosphate and phenylmethylsulfonyl fluoride. Functionally, involved in the detoxification of xenobiotics and in the activation of ester and amide prodrugs. Active towards triacylglycerides containing short-chain fatty acids from C2 to C6, and 1(3)-monoacylglycerols containing fatty acids from C2 to C12. Inactive on long-chain triacylglycerols and diacylglycerol. Hydrolyzes aromatic and alkyl esters and vitamin A acetate. The hydrolysis rate depends upon the amino acid promoiety and the esterification site of the prodrug. Aromatic promoieties are favored, highest rates are observed with phenylalanyl progdrugs, hydrolysis of valyl and isoleucyl prodrugs is less efficient. With floxuridine prodrugs, activity is higher on 5' monoesters than on 3' monoesters. With gemcitabine prodrugs, activity is higher on 3' monoesters than on 5' monoesters. The protein is Liver carboxylesterase of Sus scrofa (Pig).